A 380-amino-acid polypeptide reads, in one-letter code: Cytochrome b (380 aa).

The next 4 membrane-spanning stretches (helical) occupy residues phenylalanine 33–methionine 53, tryptophan 77–isoleucine 98, tryptophan 113–leucine 133, and phenylalanine 178–leucine 198. Residues histidine 83 and histidine 97 each contribute to the heme b site. 2 residues coordinate heme b: histidine 182 and histidine 196. Histidine 201 lines the a ubiquinone pocket. The next 4 helical transmembrane spans lie at tyrosine 226 to asparagine 246, leucine 288 to histidine 308, serine 320 to glycine 340, and phenylalanine 347 to proline 367.

The protein belongs to the cytochrome b family. As to quaternary structure, the cytochrome bc1 complex contains 3 respiratory subunits (MT-CYB, CYC1 and UQCRFS1), 2 core proteins (UQCRC1 and UQCRC2) and probably 6 low-molecular weight proteins. Heme b serves as cofactor.

It localises to the mitochondrion inner membrane. Component of the ubiquinol-cytochrome c reductase complex (complex III or cytochrome b-c1 complex) that is part of the mitochondrial respiratory chain. The b-c1 complex mediates electron transfer from ubiquinol to cytochrome c. Contributes to the generation of a proton gradient across the mitochondrial membrane that is then used for ATP synthesis. This Lepisosteus oculatus (Spotted gar) protein is Cytochrome b (mt-cyb).